Here is a 319-residue protein sequence, read N- to C-terminus: Ferrochelatase (319 aa).

Fe cation-binding residues include His-193 and Glu-274.

Belongs to the ferrochelatase family.

The protein resides in the cytoplasm. It catalyses the reaction heme b + 2 H(+) = protoporphyrin IX + Fe(2+). It functions in the pathway porphyrin-containing compound metabolism; protoheme biosynthesis; protoheme from protoporphyrin-IX: step 1/1. In terms of biological role, catalyzes the ferrous insertion into protoporphyrin IX. The polypeptide is Ferrochelatase (Erwinia tasmaniensis (strain DSM 17950 / CFBP 7177 / CIP 109463 / NCPPB 4357 / Et1/99)).